Consider the following 869-residue polypeptide: Synaptonemal complex protein ZEP1 (869 aa).

Coiled-coil stretches lie at residues 64 to 298 (TDLE…SGFT), 330 to 614 (HEEK…SERY), and 641 to 713 (RAYH…WKVM). The tract at residues 841–869 (GSHPHPANIGELFSEGSLNPYAEDPYAFG) is disordered.

In terms of assembly, interacts with CRC1. In terms of tissue distribution, highly expressed in panicles.

The protein localises to the nucleus. It is found in the chromosome. Functionally, required for chromosome synapsis and regulates crossover frequency during meiosis. Acts as a transverse filament protein and constitutes the central element of the synaptonemal complex. The protein is Synaptonemal complex protein ZEP1 (ZEP1) of Oryza sativa subsp. japonica (Rice).